The primary structure comprises 147 residues: Cytochrome c-type biogenesis protein CcmE (147 aa).

Over 1–9 the chain is Cytoplasmic; that stretch reads MKSLKKKRR. The chain crosses the membrane as a helical; Signal-anchor for type II membrane protein span at residues 10 to 30; that stretch reads IQILVAAAVALVLAVGLIGYG. Residues 31-147 are Periplasmic-facing; sequence FRDGINLYRS…EQGVYQEPNS (117 aa). The heme site is built by His123 and Tyr127.

This sequence belongs to the CcmE/CycJ family.

It is found in the cell inner membrane. In terms of biological role, heme chaperone required for the biogenesis of c-type cytochromes. Transiently binds heme delivered by CcmC and transfers the heme to apo-cytochromes in a process facilitated by CcmF and CcmH. This chain is Cytochrome c-type biogenesis protein CcmE, found in Paracoccus denitrificans (strain Pd 1222).